The sequence spans 545 residues: Chaperonin GroEL (545 aa).

ATP-binding positions include 29-32 (TLGP), lysine 50, 86-90 (DGTTT), glycine 413, and aspartate 495.

This sequence belongs to the chaperonin (HSP60) family. As to quaternary structure, forms a cylinder of 14 subunits composed of two heptameric rings stacked back-to-back. Interacts with the co-chaperonin GroES.

Its subcellular location is the cytoplasm. The catalysed reaction is ATP + H2O + a folded polypeptide = ADP + phosphate + an unfolded polypeptide.. In terms of biological role, together with its co-chaperonin GroES, plays an essential role in assisting protein folding. The GroEL-GroES system forms a nano-cage that allows encapsulation of the non-native substrate proteins and provides a physical environment optimized to promote and accelerate protein folding. In Borreliella burgdorferi (strain ATCC 35210 / DSM 4680 / CIP 102532 / B31) (Borrelia burgdorferi), this protein is Chaperonin GroEL.